The primary structure comprises 535 residues: T-complex protein 1 subunit beta (535 aa).

Met1 carries the N-acetylmethionine modification. At Ala2 the chain carries N-acetylalanine. Ser3 carries the post-translational modification Phosphoserine. Residue Lys13 is modified to N6-acetyllysine. Gly44 contacts ADP. ATP is bound at residue Gly44. Ser60 is subject to Phosphoserine. Asp97 contacts Mg(2+). Gly98, Thr99, Thr100, and Ser101 together coordinate ADP. 3 residues coordinate ATP: Gly98, Thr99, and Thr100. Residue Lys154 is modified to N6-acetyllysine. ADP-binding residues include Ser168 and Ser169. Position 181 is an N6-acetyllysine (Lys181). Lys248 participates in a covalent cross-link: Glycyl lysine isopeptide (Lys-Gly) (interchain with G-Cter in SUMO2). The residue at position 260 (Ser260) is a Phosphoserine. Thr261 carries the phosphothreonine modification. Residues Gly410, Glu495, and Lys500 each contribute to the ADP site. Residues Glu495 and Lys500 each coordinate ATP.

The protein belongs to the TCP-1 chaperonin family. In terms of assembly, component of the chaperonin-containing T-complex (TRiC), a hexadecamer composed of two identical back-to-back stacked rings enclosing a protein folding chamber. Each ring is made up of eight different subunits: TCP1/CCT1, CCT2, CCT3, CCT4, CCT5, CCT6A/CCT6, CCT7, CCT8. Interacts with PACRG. Interacts with FLCN. Interacts with DLEC1. Interacts with SVEP1.

It is found in the cytoplasm. The enzyme catalyses ATP + H2O = ADP + phosphate + H(+). Component of the chaperonin-containing T-complex (TRiC), a molecular chaperone complex that assists the folding of actin, tubulin and other proteins upon ATP hydrolysis. The TRiC complex mediates the folding of WRAP53/TCAB1, thereby regulating telomere maintenance. As part of the TRiC complex may play a role in the assembly of BBSome, a complex involved in ciliogenesis regulating transports vesicles to the cilia. The sequence is that of T-complex protein 1 subunit beta from Homo sapiens (Human).